Consider the following 262-residue polypeptide: Acyl-[acyl-carrier-protein]--UDP-N-acetylglucosamine O-acyltransferase (262 aa).

It belongs to the transferase hexapeptide repeat family. LpxA subfamily. Homotrimer.

The protein localises to the cytoplasm. It carries out the reaction a (3R)-hydroxyacyl-[ACP] + UDP-N-acetyl-alpha-D-glucosamine = a UDP-3-O-[(3R)-3-hydroxyacyl]-N-acetyl-alpha-D-glucosamine + holo-[ACP]. It participates in glycolipid biosynthesis; lipid IV(A) biosynthesis; lipid IV(A) from (3R)-3-hydroxytetradecanoyl-[acyl-carrier-protein] and UDP-N-acetyl-alpha-D-glucosamine: step 1/6. In terms of biological role, involved in the biosynthesis of lipid A, a phosphorylated glycolipid that anchors the lipopolysaccharide to the outer membrane of the cell. This Aliivibrio fischeri (strain ATCC 700601 / ES114) (Vibrio fischeri) protein is Acyl-[acyl-carrier-protein]--UDP-N-acetylglucosamine O-acyltransferase.